A 150-amino-acid polypeptide reads, in one-letter code: Large ribosomal subunit protein bL9 (150 aa).

The protein belongs to the bacterial ribosomal protein bL9 family.

Binds to the 23S rRNA. This chain is Large ribosomal subunit protein bL9, found in Shewanella denitrificans (strain OS217 / ATCC BAA-1090 / DSM 15013).